Here is a 196-residue protein sequence, read N- to C-terminus: GTP cyclohydrolase-2 (196 aa).

49–53 (RVHSE) lines the GTP pocket. 3 residues coordinate Zn(2+): cysteine 54, cysteine 65, and cysteine 67. GTP is bound by residues glutamine 70, 92–94 (EGR), and threonine 114. Aspartate 126 functions as the Proton acceptor in the catalytic mechanism. Catalysis depends on arginine 128, which acts as the Nucleophile. The GTP site is built by threonine 149 and lysine 154.

This sequence belongs to the GTP cyclohydrolase II family. Homodimer. Zn(2+) is required as a cofactor.

The catalysed reaction is GTP + 4 H2O = 2,5-diamino-6-hydroxy-4-(5-phosphoribosylamino)-pyrimidine + formate + 2 phosphate + 3 H(+). Its pathway is cofactor biosynthesis; riboflavin biosynthesis; 5-amino-6-(D-ribitylamino)uracil from GTP: step 1/4. Catalyzes the conversion of GTP to 2,5-diamino-6-ribosylamino-4(3H)-pyrimidinone 5'-phosphate (DARP), formate and pyrophosphate. In Yersinia pestis, this protein is GTP cyclohydrolase-2.